We begin with the raw amino-acid sequence, 717 residues long: Nuclear factor of activated T-cells, cytoplasmic 1 (717 aa).

The disordered stretch occupies residues 1–38 (MPNTSFPVPSKFPLGPPAAVCGSGETLRPAPPSGGTMK). Residues 120-125 (PRIEIT) form a calcineurin-binding region. A transactivation domain A (TAD-A) region spans residues 128-220 (LGLHHGSGQF…CVSPKTTDPE (93 aa)). Residues 202–298 (PQTSPWQSPC…PHGSPRVSVT (97 aa)) form a disordered region. The segment covering 203–216 (QTSPWQSPCVSPKT) has biased composition (polar residues). 2 tandem repeats follow at residues 205–221 (SPWQ…DPEE) and 235–251 (SPRH…ITEE). A 3 X SP repeats region spans residues 205–300 (SPWQSPCVSP…GSPRVSVTED (96 aa)). A phosphoserine mark is found at Ser235 and Ser239. Residues 238–250 (HSPSTSPRASITE) show a composition bias toward polar residues. A Phosphoserine; by PKA modification is found at Ser247. Positions 267–269 (KRK) match the Nuclear localization signal motif. Residues Ser271 and Ser296 each carry the phosphoserine; by PKA modification. Repeat unit 3 spans residues 284-300 (SPTPSPHGSPRVSVTED). The Nuclear export signal motif lies at 312–323 (SAIVAAINALTT). Residues 411-593 (PSLPALDWQL…NPIECSQRSA (183 aa)) enclose the RHD domain. The DNA-binding element occupies 440–447 (RAHYETEG). Positions 683–685 (KRK) match the Nuclear localization signal motif.

Member of the multicomponent NFATC transcription complex that consists of at least two components, a pre-existing cytoplasmic component NFATC2 and an inducible nuclear component NFATC1. Other members such as NFATC4, NFATC3 or members of the activating protein-1 family, MAF, GATA4 and Cbp/p300 can also bind the complex. NFATC proteins bind to DNA as monomers. Interacts with HOMER2 and HOMER3; this interaction may compete with calcineurin/PPP3CA-binding and hence prevent NFATC1 dephosphorylation and activation. Interacts with TLE6/GRG6. Phosphorylated by NFATC-kinase and GSK3B; phosphorylation induces NFATC1 nuclear exit and dephosphorylation by calcineurin promotes nuclear import. Phosphorylation by PKA and DYRK2 negatively modulates nuclear accumulation, and promotes subsequent phosphorylation by GSK3B or casein kinase 1. As to expression, expressed in the submandibular gland (at protein level). Expressed in basal epidermal cells (at protein level). Expressed in spleen, skeletal muscle and skin. Express in the lung and thymus. Weakly expressed in heart, brain, liver and kidney. Not expressed in testis. Expressed in osteoclasts. Also expressed during TNFSF11/RANKL-induced differentiation of bone marrow-derived macrophages to osteoclasts.

The protein localises to the cytoplasm. It is found in the nucleus. Plays a role in the inducible expression of cytokine genes in T-cells, especially in the induction of the IL-2 or IL-4 gene transcription. Also controls gene expression in embryonic cardiac cells. Could regulate not only the activation and proliferation but also the differentiation and programmed death of T-lymphocytes as well as lymphoid and non-lymphoid cells. Required for osteoclastogenesis and regulates many genes important for osteoclast differentiation and function. In Mus musculus (Mouse), this protein is Nuclear factor of activated T-cells, cytoplasmic 1 (Nfatc1).